Reading from the N-terminus, the 234-residue chain is Adenosine 5'-phosphosulfate reductase (234 aa).

[4Fe-4S] cluster-binding residues include Cys120, Cys121, Cys203, and Cys206. Catalysis depends on Cys229, which acts as the Nucleophile; cysteine thiosulfonate intermediate.

Belongs to the PAPS reductase family. CysH subfamily. [4Fe-4S] cluster is required as a cofactor.

It is found in the cytoplasm. The catalysed reaction is [thioredoxin]-disulfide + sulfite + AMP + 2 H(+) = adenosine 5'-phosphosulfate + [thioredoxin]-dithiol. The protein operates within sulfur metabolism; hydrogen sulfide biosynthesis; sulfite from sulfate. In terms of biological role, catalyzes the formation of sulfite from adenosine 5'-phosphosulfate (APS) using thioredoxin as an electron donor. The sequence is that of Adenosine 5'-phosphosulfate reductase from Bacillus cereus (strain ZK / E33L).